The chain runs to 5495 residues: Microtubule-associated protein futsch (5495 aa).

Disordered regions lie at residues 1–97 (MGDQ…DADG), 656–975 (AKAD…LKEE), 988–1074 (RDEM…AEEE), 1086–1111 (ERKARLEGASARQDESELDVEPEQSK), 1128–1167 (KSRTEEQLAKPAEEELSSPTPEEKLSKKTSDTKDDQIGAP), 1185–1204 (SATIESGATTAPTLPEDERI), 1255–1275 (KDAPKDANAEALGELPDSGER), 1306–1358 (HEEA…EPNK), 1402–1840 (NQED…VVES), 1866–2631 (EIGK…PGFV), 2709–2810 (AKTV…KDFA), 2830–4166 (LPTL…DLSL), 4196–4230 (KAESSPRPAVLSKPAEFSQPDTGHTASTPVDEASP), 4362–4612 (IIPD…ASQL), 4636–4668 (AQKSNKEIKDARETKVTSQFTTTTSSATKDDSL), 4687–4975 (AFST…QMLA), 5035–5065 (KTVTTTDSSEPDSEKVVVTTTRTTSESERDQ), 5101–5138 (SYELQHSSSGVSKRSDLDADGDESQDDIPPQYGSEEHS), 5170–5199 (PSTEPIPIQGAPSGDSQSSESVESSSQTWA), and 5328–5350 (GLPSPAPLPVEGGADIRTTPKKE). A compositionally biased stretch (low complexity) spans 35-48 (AKGAGDGPAQDAAQ). 3 stretches are compositionally biased toward basic and acidic residues: residues 656–672 (AKADSMDTDAEPEHEAD), 696–716 (EPEHEPEAEQDKDVGEEKKVE), and 758–795 (GKADKPRAEVKPVVRSRIDTKPPKSMDRKLAKRDEKKS). Composition is skewed to low complexity over residues 797–806 (PTTTPAARAP) and 819–831 (PATKSSPSSTPAK). The span at 832 to 843 (SAKEANNRKVLE) shows a compositional bias: basic and acidic residues. A compositionally biased stretch (low complexity) spans 850–888 (RVQATSTVSRRVTSTASERRVQQQAEAKTAATGATQATQ). Basic and acidic residues predominate over residues 918 to 931 (KAADLKKTRLDKGG). The segment covering 932 to 942 (TTDSSLVSTPS) has biased composition (polar residues). 2 stretches are compositionally biased toward basic and acidic residues: residues 962 to 975 (DAEKQRELDDLKEE) and 988 to 1007 (RDEMKRQQHQQIKAELREMP). Over residues 1012-1041 (GDGENEPDEEEEYLIIEKEEVEQYTEDSIV) the composition is skewed to acidic residues. Positions 1047-1065 (MTKEEEIQKHQRDSQESEK) are enriched in basic and acidic residues. 2 stretches are compositionally biased toward basic and acidic residues: residues 1128 to 1140 (KSRTEEQLAKPAE) and 1148 to 1163 (PEEKLSKKTSDTKDDQ). Residues 1187–1196 (TIESGATTAP) show a composition bias toward polar residues. Basic and acidic residues-rich tracts occupy residues 1306-1319 (HEEADLGLYEKDSQ), 1327-1337 (SHKEESAKEEK), 1343-1358 (KENKVGEIELGDEPNK), and 1408-1443 (EQVKDKEEHEQKIESGIITEKEAKKSASTPEEKETS). Tandem repeats lie at residues 1469–1502 (REDTGSIESPPTIEEAIEVEVQAKQEAQKPVPAP) and 1513–1539 (LASKETSRPESATGSVKEDTEQTKSKK). Positions 1469 to 4032 (REDTGSIESP…SPLASKESSR (2564 aa)) are 53 X approximate repeat. 5 stretches are compositionally biased toward basic and acidic residues: residues 1546–1555 (PESEAKDKKS), 1571–1663 (SVKD…DEKS), 1679–1696 (SVKDETEKSKEPSRRESI), 1718–1732 (GIKDESAKPESRRDS), and 1748–1779 (SVKDEPIKSTEKSRRESVAESFKADSTKDEKS). Tandem repeats lie at residues 1622 to 1649 (KSALASKEASRPESVTDKSKEPSRRESI), 1660 to 1686 (DEKSAPPSKEASRPGSVVESVKDETEK), 1690 to 1718 (PSRRESIAESAKPPIEFREVSRPESVIDG), 1755 to 1782 (KSTEKSRRESVAESFKADSTKDEKSPLT), 1790 to 1818 (ESAVENVMDAVGSAERSQPESVTASRDVS), 1837 to 1865 (VVESVIPASDVVEIEKGAADKEKGVFVSL), 1874 to 1902 (SEVISRPGPVVESVKPESRRESSTEIVLP), 1911 to 1939 (PSRPESKVECLKDESEVLKGSTRRESVAE), 1948 to 1976 (KETSRPESAVGSMKDESMSKEPSRRESVK), 1985 to 2013 (TSRPASVAESAKDGADDLKELSRPESTTQ), 2022 to 2050 (DEKSPLASEEASRPASVAESVKDEAEKSK), 2059 to 2087 (AEKSPLPSKEASRPASVAESIKDEAEKSK), 2096 to 2124 (AEKSPLPSKEASRPASVAESIKDEAEKSK), 2133 to 2161 (AEKSPLPSKEASRPASVAESIKDEAEKSK), 2170 to 2198 (AEKSPLPSKEASRPASVAESIKDEAEKSK), 2215 to 2243 (KEASRPASVAESIKDEAEKSKEESRRESV), and 2262 to 2292 (ESIKDEAEKSKEESRRESVAEKSPLPSKEAS). Over residues 1804–1815 (ERSQPESVTASR) the composition is skewed to polar residues. 18 stretches are compositionally biased toward basic and acidic residues: residues 1887-1896 (VKPESRRESS), 1904-1942 (HAEDSKEPSRPESKVECLKDESEVLKGSTRRESVAESDK), 1960-1976 (MKDESMSKEPSRRESVK), 1994-2007 (SAKDGADDLKELSR), 2041-2059 (SVKDEAEKSKEESRRESVA), 2078-2096 (SIKDEAEKSKEESRRESVA), 2115-2133 (SIKDEAEKSKEESRRESVA), 2152-2170 (SIKDEAEKSKEESRRESVA), 2189-2207 (SIKDEAEKSKEESRRESVA), 2226-2244 (SIKDEAEKSKEESRRESVA), 2263-2281 (SIKDEAEKSKEESRRESVA), 2300-2318 (SIKDEAEKSKEETRRESVA), 2337-2355 (SIKDEAEKSKEESRRESAA), 2374-2391 (SVKDEADKSKEESRRESM), 2419-2435 (SVKDDPVKSKEPSRRES), 2466-2482 (SVKDEAEKQESRRESKT), 2560-2588 (IKYDLDKPQIIKDDKSTEHSRRESLEDKS), and 2604-2627 (SDHEAAVAIEDDAKSSISPKDKSR). Copy 20 of the repeat occupies 2355–2391 (AEKSPLPSKEASRPASVAESVKDEADKSKEESRRESM). 2 consecutive repeat copies span residues 2703–2726 (LAQIGAAKTVSSPLDEALRTPSAP) and 2761–2787 (WVAESKDDAAQLKSSVEDLRSPVASTE). Basic and acidic residues predominate over residues 2764 to 2780 (ESKDDAAQLKSSVEDLR). At S2800 the chain carries Phosphoserine; by GSK3-beta. 3 tandem repeats follow at residues 2820 to 2846 (LPLTIELKGNLPTLSSPVDVAHGDFPQ), 2864 to 2892 (LSKVDIEKTASSPIDEAPKSLIGCPAEER), and 2907 to 2933 (VEKSKDASRPPSVVESTKADSTKGDIS). Over residues 2845 to 2861 (PQTSTPTSSPTVASVQP) the composition is skewed to low complexity. 2 stretches are compositionally biased toward basic and acidic residues: residues 2889–2914 (AEERPESPAESAKDAAESVEKSKDAS) and 2942–2954 (GPKDDVEKSKESS). The span at 2955–2966 (RPPSVSASITGD) shows a compositional bias: polar residues. 28 tandem repeats follow at residues 2956–2987 (PPSVSASITGDSTKDVSRPASVVESVKDEHDK), 3006–3034 (GKSDSKSSSQDSQKDEKSTLASKEASRRE), 3049–3075 (SRPESVIASGEPVPRESKSPLDSKDTS), 3089–3117 (EKSEQQSRRESVAESVKADTKKDGKSQEA), 3131–3158 (DEKQESRRQSITGSHKAMSTMGDESPMD), 3200–3224 (KSDITKGEKSPLPSKEVSRPESVVG), 3228–3256 (DEKAESRRESVAESVKPESSKDATSAPPS), 3265–3293 (VLGSLKDEGDKTTSRRVSVADSIKDEKSL), 3302–3330 (PESEAESLKDAAAPSQETSRPESVTESVK), 3339–3367 (KEASRPASVAENAKDSADESKEQRPESLP), 3376–3404 (DEKSPLASKDEAEKSKEESRRESVAEQFP), 3413–3441 (PASVAESVKDEAEKSKEESPLMSKEASRP), 3450–3478 (DEAEKSKEESRRESVAEKSPLPSKEASRP), 3487–3515 (DEADKSKEESRRESGAEKSPLASKEASRP), 3524–3552 (DEAEKSKEESRRESVAEKSPLPSKEASRP), 3561–3589 (DEAEKSKEESRRDSVAEKSPLASKEASRP), 3598–3626 (DEAEKSKEESRRESVAEKSPLASKEASRP), 3635–3663 (DEAEKSKEESRRESVAEKSPLASKEASRP), 3672–3700 (DEAEKSKEESSRDSVAEKSPLASKEASRP), 3709–3737 (DEAEKSKEESRRESVAEKSPLASKEASRP), 3746–3774 (DDAEKSKEESRRESVAEKSPLASKEASRP), 3783–3811 (DEAEKSKEESRRESVAEKSPLPSKEASRP), 3820–3848 (DEAEKSKEESRRESVAEKSSLASKKASRP), 3867–3894 (RRESVAEKSPLASKEASRPASVAESVKD), 3895–3921 (EAEKSKEESRRESVAEKSPLPSKEASR), 3931–3958 (DEADKSKEESRRESGAEKSPLASMEASR), 3968–3995 (DETEKSKEESRRESVTEKSPLPSKEASR), and 4005–4032 (DEAEKSKEESRRESVAEKSPLASKESSR). 7 stretches are compositionally biased toward basic and acidic residues: residues 2980-2996 (SVKDEHDKAESRRESIA), 3017-3051 (SQKDEKSTLASKEASRRESVVESSKDDAEKSESRP), 3061-3075 (VPRESKSPLDSKDTS), 3087-3116 (EDEKSEQQSRRESVAESVKADTKKDGKSQE), 3156-3168 (PMDKADKSKEPSR), 3175-3208 (SIKHENTKDEESPLGSRRDSVAESIKSDITKGEK), and 3226-3248 (IKDEKAESRRESVAESVKPESSK). Residues S3067, S3071, and S3075 each carry the phosphoserine modification. The span at 3300 to 3310 (SRPESEAESLK) shows a compositional bias: basic and acidic residues. The span at 3316–3327 (SQETSRPESVTE) shows a compositional bias: polar residues. 14 stretches are compositionally biased toward basic and acidic residues: residues 3350–3363 (NAKDSADESKEQRP), 3373–3399 (SIKDEKSPLASKDEAEKSKEESRRESV), 3419–3431 (SVKDEAEKSKEES), 3448–3465 (VKDEAEKSKEESRRESVA), 3484–3502 (SVKDEADKSKEESRRESGA), 3521–3539 (SIKDEAEKSKEESRRESVA), 3558–3576 (SVKDEAEKSKEESRRDSVA), 3599–3613 (EAEKSKEESRRESVA), 3632–3650 (SIKDEAEKSKEESRRESVA), 3669–3687 (SVKDEAEKSKEESSRDSVA), 3710–3724 (EAEKSKEESRRESVA), 3743–3761 (SVKDDAEKSKEESRRESVA), 3780–3798 (SVKDEAEKSKEESRRESVA), and 3817–3835 (SVKDEAEKSKEESRRESVA). Over residues 3836–3850 (EKSSLASKKASRPAS) the composition is skewed to low complexity. 8 stretches are compositionally biased toward basic and acidic residues: residues 3854–3872 (SVKDEAEKSKEESRRESVA), 3891–3909 (SVKDEAEKSKEESRRESVA), 3928–3946 (SVKDEADKSKEESRRESGA), 3965–3983 (SVKDETEKSKEESRRESVT), 4002–4020 (SVKDEAEKSKEESRRESVA), 4039–4066 (SIKDEAEGTKQESRRESMPESGKAESIK), 4086–4095 (SVKDETEKPE), and 4115–4141 (AKDEKSPLHSRPESVADKSPDASKEAS). 2 stretches are compositionally biased toward polar residues: residues 4142 to 4152 (RSLSVAETASS) and 4214 to 4223 (QPDTGHTAST). Composition is skewed to basic and acidic residues over residues 4362 to 4379 (IIPDFDERQLEEKLKSTA), 4386 to 4410 (DKSTRDEKSLEISVKVEIESEKSSP), and 4419 to 4432 (IEEKDKIEQSEKAQ). Residues 4443-4461 (PESVASQPESVPSPSQSAA) show a composition bias toward low complexity. A compositionally biased stretch (basic and acidic residues) spans 4462 to 4481 (SHEHKEVELSESHKAEKSSR). Residues 4498–4508 (RPASSTSQFST) show a composition bias toward polar residues. Residues 4517–4528 (ESLLHSLTTTET) show a composition bias toward low complexity. Positions 4529–4539 (VETKQMEEKSS) are enriched in basic and acidic residues. Over residues 4540-4560 (FESVSTSVTKSTVLSSQSTVQ) the composition is skewed to low complexity. 2 stretches are compositionally biased toward basic and acidic residues: residues 4575-4584 (KVEDSSRRES) and 4639-4650 (SNKEIKDARETK). Composition is skewed to low complexity over residues 4651-4662 (VTSQFTTTTSSA) and 4703-4714 (TTASAVSSTSAS). Residues 4744–4754 (PEDEEPADDVD) are compositionally biased toward acidic residues. Basic and acidic residues-rich tracts occupy residues 4755–4764 (ERSSVKESRS) and 4788–4798 (LVEEEHEHVEE). Positions 4804–4829 (TSTSKTTTLLQSSEQSSTTTSSTSKT) are enriched in low complexity. The segment covering 4835 to 4851 (ESITLTQMDQQTSQSQG) has biased composition (polar residues). The span at 4875-4905 (GSAGSVIGAGAGAVAAGGKCESSAASIVSSS) shows a compositional bias: low complexity. Over residues 4915–4930 (GKSSPGALTSESQSIP) the composition is skewed to polar residues. Residue S4950 is modified to Phosphoserine; by GSK3-beta. Positions 4955–4970 (VSKDELKSLEMQHHSQ) are enriched in basic and acidic residues. The segment covering 5101-5112 (SYELQHSSSGVS) has biased composition (polar residues). Residues 5185–5196 (SQSSESVESSSQ) show a composition bias toward low complexity.

Heterodimer of a heavy and a light chain. Interacts with Fmr1. Found in a complex with tubulin and Futsch. In terms of processing, several minor light chains can be created with markedly different pIs. Post-translationally, phosphorylated by SGG/GSK3. Phosphorylated by LRRK2 at the presynapse of neuromuscular junctions, which negatively regulates the activity controlling synaptic differentiation. In terms of tissue distribution, neuronal cells within the PNS and CNS.

The protein localises to the cytoplasm. It is found in the cytoskeleton. In terms of biological role, during embryogenesis, necessary for dendritic and axonal organization and growth at the neuromuscular junction through the regulation of the synaptic microtubule cytoskeleton. Microtubule hairpin loops are found within a small subset of synaptic boutons at the neuromuscular synapse, these loops are stabilized by futsch. Loop morphology and dynamics suggest that rearrangement of these microtubule-based loops is a critical component of the process of bouton division and for subsequent nerve-terminal growth and branching. Translation is repressed by Fmr1. Together with ringer, required for neuromuscular junction (NMJ) bouton growth by regulating synaptic microtubules. Function with ringer in maintaining microtubule stability and dynamics, is essential for promoting axon regeneration in response to peripheral (PNS) and central nervous system (CNS) injury. In response to axotomy, acts downstream of a stress response cascade involving Xbp1 splicing, to control axon regeneration. The polypeptide is Microtubule-associated protein futsch (futsch) (Drosophila melanogaster (Fruit fly)).